A 312-amino-acid chain; its full sequence is Malate dehydrogenase (312 aa).

NAD(+)-binding positions include 12 to 17 (GAGFTG) and Asp36. Substrate is bound by residues Arg87 and Arg93. NAD(+)-binding positions include Asn100 and 123-125 (LTN). Asn125 provides a ligand contact to substrate. At Ser149 the chain carries Phosphoserine. Arg156 lines the substrate pocket. His180 functions as the Proton acceptor in the catalytic mechanism.

This sequence belongs to the LDH/MDH superfamily. MDH type 3 family.

It catalyses the reaction (S)-malate + NAD(+) = oxaloacetate + NADH + H(+). Catalyzes the reversible oxidation of malate to oxaloacetate. This chain is Malate dehydrogenase, found in Bacillus anthracis (strain A0248).